We begin with the raw amino-acid sequence, 221 residues long: Oxaloacetate tautomerase FAHD1, mitochondrial (221 aa).

The N-terminal 24 residues, 1-24 (MAASRPLSRFWEWGKNIVCVGRNY), are a transit peptide targeting the mitochondrion. Ser-37 carries the phosphoserine modification. The Mg(2+) site is built by Glu-68, Glu-70, and Asp-99. Lys-110 is modified (N6-acetyllysine). Lys-112 carries the N6-succinyllysine modification.

It belongs to the FAH family. Homodimer. Mg(2+) is required as a cofactor. Mn(2+) serves as cofactor.

It localises to the mitochondrion. It is found in the cytoplasm. The protein localises to the cytosol. It catalyses the reaction oxaloacetate = enol-oxaloacetate. It carries out the reaction oxaloacetate + H(+) = pyruvate + CO2. The enzyme catalyses a 3-acylpyruvate + H2O = a carboxylate + pyruvate + H(+). The catalysed reaction is acetylpyruvate + H2O = acetate + pyruvate + H(+). It catalyses the reaction 3-fumarylpyruvate + H2O = fumarate + pyruvate + H(+). With respect to regulation, oxaloacetate decarboxylation is competitively inhibited by oxalate. In terms of biological role, tautomerase that converts enol-oxaloacetate, a strong inhibitor of succinate dehydrogenase, to the physiological keto form of oxaloacetate. It is thereby required to maximize aerobic respiration efficiency by preventing succinate dehydrogenase inhibition. Also acts as a weak oxaloacetate decarboxylase (ODx), catalyzing the decarboxylation of oxaloacetate (OAA) to pyruvate and CO(2), and as such is likely a regulatory enzyme in the TCA cycle. Also displays acylpyruvase activity, being able to hydrolyze acetylpyruvate and fumarylpyruvate in vitro. The polypeptide is Oxaloacetate tautomerase FAHD1, mitochondrial (Bos taurus (Bovine)).